Reading from the N-terminus, the 976-residue chain is Collagen alpha-1(I) chain (976 aa).

Position 1 is a phosphoserine (Ser1). The interval 1 to 976 (SAGGISVPGP…PGPPGPPGPP (976 aa)) is disordered. A 4-hydroxyproline mark is found at Pro20, Pro23, Pro26, Pro35, Pro38, Pro41, Pro55, Pro70, Pro76, Pro85, and Pro91. The span at 58–72 (NGDDGEAGKPGRPGE) shows a compositional bias: basic and acidic residues. Lys94 carries the 5-hydroxylysine; alternate modification. A glycan (O-linked (Gal...) hydroxylysine; alternate) is linked at Lys94. At Ser100 the chain carries Phosphoserine. 2 stretches are compositionally biased toward low complexity: residues 108–118 (DAGPAGPKGAP) and 132–150 (PGAS…TGAA). 13 positions are modified to 4-hydroxyproline: Pro118, Pro132, Pro153, Pro162, Pro165, Pro192, Pro195, Pro207, Pro213, Pro222, Pro228, Pro231, and Pro246. The segment covering 152 to 164 (PPGPTGPAGPPGF) has biased composition (pro residues). The segment covering 198-237 (AGAAGPAGNPGADGQPGAKGANGAPGIAGAPGFPGARGPS) has biased composition (low complexity). The residue at position 249 (Lys249) is a 5-hydroxylysine. Pro255, Pro258, Pro266, Pro275, Pro290, Pro296, Pro304, and Pro310 each carry 4-hydroxyproline. The span at 294–308 (GLPGPGERGGPGSRG) shows a compositional bias: gly residues. Lys319 is modified (5-hydroxylysine). 25 positions are modified to 4-hydroxyproline: Pro328, Pro337, Pro343, Pro349, Pro358, Pro361, Pro370, Pro379, Pro385, Pro397, Pro406, Pro415, Pro418, Pro436, Pro453, Pro459, Pro465, Pro471, Pro477, Pro483, Pro495, Pro504, Pro517, Pro523, and Pro532. The span at 352-378 (KGLTGSPGSPGPDGKTGPPGPAGQDGR) shows a compositional bias: low complexity. Residues 387–406 (ARGQAGVMGFPGPKGAAGEP) show a composition bias toward low complexity. Low complexity predominate over residues 465-474 (PGEAGKPGEQ). Lys544 is modified (5-hydroxylysine). A 4-hydroxyproline mark is found at Pro550, Pro565, and Pro571. Positions 577-591 (SGPSGPAGPTGARGA) are enriched in low complexity. Phosphoserine is present on Ser580. 8 positions are modified to 4-hydroxyproline: Pro592, Pro598, Pro601, Pro610, Pro616, Pro634, Pro643, and Pro652. Positions 604–631 (AGFAGPPGADGQPGAKGEPGDAGAKGDA) are enriched in low complexity. Lys655 carries the post-translational modification 5-hydroxylysine. Over residues 660–676 (SAGPPGATGFPGAAGRV) the composition is skewed to low complexity. A 4-hydroxyproline mark is found at Pro664 and Pro670. Position 678 is a 3-hydroxyproline (Pro678). 4-hydroxyproline occurs at positions 679, 688, 691, 718, 726, 735, 753, 762, 765, 771, 786, 792, 798, 806, and 812. A compositionally biased stretch (low complexity) spans 723 to 735 (KGSPGADGPAGAP). Over residues 785-795 (PPGPMGPPGLA) the composition is skewed to pro residues. Position 821 is a 5-hydroxylysine (Lys821). Over residues 829-844 (PGPPGAPGAPGAPGPV) the composition is skewed to pro residues. 4-hydroxyproline occurs at positions 832, 835, and 838. Low complexity predominate over residues 864-878 (AGPAGARGPAGPQGP). The segment covering 879–893 (RGDKGETGEQGDRGI) has biased composition (basic and acidic residues). Lys882 carries the post-translational modification 5-hydroxylysine. At Lys894 the chain carries 5-hydroxylysine; alternate. Lys894 is a glycosylation site (O-linked (Gal...) hydroxylysine; alternate). 4-hydroxyproline occurs at positions 907, 910, 928, and 943. Positions 910–943 (PGEQGPSGASGPAGPRGPPGSAGSPGKDGLNGLP) are enriched in low complexity. Pro948 is subject to 3-hydroxyproline. Position 949 is a 4-hydroxyproline (Pro949). Pro residues predominate over residues 961-976 (VGPPGPPGPPGPPGPP). Pro963 is subject to 3-hydroxyproline. Pro964 is modified (4-hydroxyproline). Pro966 is modified (3-hydroxyproline). 4-hydroxyproline is present on Pro967. Pro969 bears the 3-hydroxyproline mark. 3 positions are modified to 4-hydroxyproline: Pro970, Pro973, and Pro976.

The protein belongs to the fibrillar collagen family. Trimers of one alpha 2(I) and two alpha 1(I) chains. Post-translationally, contains mostly 4-hydroxyproline. Proline residues at the third position of the tripeptide repeating unit (G-X-Y) are hydroxylated in some or all of the chains. Contains 3-hydroxyproline at a few sites. This modification occurs on the first proline residue in the sequence motif Gly-Pro-Hyp, where Hyp is 4-hydroxyproline. In terms of processing, lysine residues at the third position of the tripeptide repeating unit (G-X-Y) are 5-hydroxylated in some or all of the chains. Post-translationally, O-glycosylated on hydroxylated lysine residues. The O-linked glycan consists of a Glc-Gal disaccharide. As to expression, expressed in bones.

It is found in the secreted. The protein localises to the extracellular space. Its subcellular location is the extracellular matrix. In terms of biological role, type I collagen is a member of group I collagen (fibrillar forming collagen). The chain is Collagen alpha-1(I) chain from Acratocnus ye (Hispaniolan ground sloth).